The primary structure comprises 252 residues: Ribosomal RNA small subunit methyltransferase A (252 aa).

Residues Asn-10, Leu-12, Gly-36, Glu-57, Asp-81, and Asn-98 each contribute to the S-adenosyl-L-methionine site.

This sequence belongs to the class I-like SAM-binding methyltransferase superfamily. rRNA adenine N(6)-methyltransferase family. RsmA subfamily.

It is found in the cytoplasm. It catalyses the reaction adenosine(1518)/adenosine(1519) in 16S rRNA + 4 S-adenosyl-L-methionine = N(6)-dimethyladenosine(1518)/N(6)-dimethyladenosine(1519) in 16S rRNA + 4 S-adenosyl-L-homocysteine + 4 H(+). Its function is as follows. Specifically dimethylates two adjacent adenosines (A1518 and A1519) in the loop of a conserved hairpin near the 3'-end of 16S rRNA in the 30S particle. May play a critical role in biogenesis of 30S subunits. The chain is Ribosomal RNA small subunit methyltransferase A from Mycoplasmopsis pulmonis (strain UAB CTIP) (Mycoplasma pulmonis).